Reading from the N-terminus, the 130-residue chain is Large ribosomal subunit protein bL12 (130 aa).

A disordered region spans residues 94 to 114 (MTEGLPKTVKEKTSKSDAEDT).

This sequence belongs to the bacterial ribosomal protein bL12 family. Homodimer. Part of the ribosomal stalk of the 50S ribosomal subunit. Forms a multimeric L10(L12)X complex, where L10 forms an elongated spine to which 2 to 4 L12 dimers bind in a sequential fashion. Binds GTP-bound translation factors.

Its function is as follows. Forms part of the ribosomal stalk which helps the ribosome interact with GTP-bound translation factors. Is thus essential for accurate translation. In Chlamydia caviae (strain ATCC VR-813 / DSM 19441 / 03DC25 / GPIC) (Chlamydophila caviae), this protein is Large ribosomal subunit protein bL12.